The sequence spans 770 residues: Glutamate carboxypeptidase 2 homolog (770 aa).

The Cytoplasmic segment spans residues 1–25 (MPYVGVGAQTVSTSLTGAPMVKAYI). Residues 26-42 (AIAASLIFVFCIAALGV) form a helical; Signal-anchor for type II membrane protein membrane-spanning segment. The Extracellular portion of the chain corresponds to 43–770 (HHSERKFNKF…CVVNTLRDVI (728 aa)). N-linked (GlcNAc...) asparagine glycosylation is found at Asn-175 and Asn-337. The segment at 282–597 (SKKELFKGRT…QYWAELAKTF (316 aa)) is catalytic. 2 residues coordinate Zn(2+): His-387 and Asp-397. Asn-417 is a glycosylation site (N-linked (GlcNAc...) asparagine). Glu-435 serves as the catalytic Nucleophile. Residues Glu-436 and Asp-464 each contribute to the Zn(2+) site. Asn-469, Asn-546, and Asn-551 each carry an N-linked (GlcNAc...) asparagine glycan. His-562 contributes to the Zn(2+) binding site. 3 N-linked (GlcNAc...) asparagine glycosylation sites follow: Asn-579, Asn-606, and Asn-630.

Belongs to the peptidase M28 family. M28B subfamily. It depends on Zn(2+) as a cofactor.

It is found in the membrane. The catalysed reaction is Release of an unsubstituted, C-terminal glutamyl residue, typically from Ac-Asp-Glu or folylpoly-gamma-glutamates.. The chain is Glutamate carboxypeptidase 2 homolog from Caenorhabditis elegans.